Here is a 463-residue protein sequence, read N- to C-terminus: MLTKTKKEEKEFQKDSTTRSYWITTFGCQMNKADSERMAGTLEKMGYTRADDELNADLVLYNTCTIRDNAEHKVYSFLGRQAKRKHKIPSLKLVVAGCLAQQEGESLLRRVPELDLVMGPQHVNNLENLLGKVDLGNQVAATEETFISEDITNARRESSICGWVNIIYGCNERCSYCVVPSVRGKEQSRYPNAIKSEIQKLADDNFKEITLLGQNIDAYGRDLPGTTKEGRKENTLTDLLYYIHDINGISRIRFATSHPRYFSKRLIQACYELDKVCEHFHIPFQSGNDEILKQMSRGYNIKKYKNIIDNIRSLMPDASITADAIVAFPGETEQQYQDTLKLISDIGFDQVNTAAYSPRPNTPAAVWSNQLSEEVKKTRLQEINALVEKTARNRNQRYINNIESVLIEGLNPKNSSQIMGRTRTNRLTFVKIPKNIQFNFSLGDEIDVRINEARPFSLTGELC.

Positions 19 to 135 constitute an MTTase N-terminal domain; sequence RSYWITTFGC…LENLLGKVDL (117 aa). Positions 28, 64, 98, 170, 174, and 177 each coordinate [4Fe-4S] cluster. The region spanning 156-393 is the Radical SAM core domain; sequence RESSICGWVN…NALVEKTARN (238 aa). The TRAM domain occupies 396–463; it reads QRYINNIESV…RPFSLTGELC (68 aa).

The protein belongs to the methylthiotransferase family. MiaB subfamily. Monomer. Requires [4Fe-4S] cluster as cofactor.

It is found in the cytoplasm. The catalysed reaction is N(6)-dimethylallyladenosine(37) in tRNA + (sulfur carrier)-SH + AH2 + 2 S-adenosyl-L-methionine = 2-methylsulfanyl-N(6)-dimethylallyladenosine(37) in tRNA + (sulfur carrier)-H + 5'-deoxyadenosine + L-methionine + A + S-adenosyl-L-homocysteine + 2 H(+). Catalyzes the methylthiolation of N6-(dimethylallyl)adenosine (i(6)A), leading to the formation of 2-methylthio-N6-(dimethylallyl)adenosine (ms(2)i(6)A) at position 37 in tRNAs that read codons beginning with uridine. This is tRNA-2-methylthio-N(6)-dimethylallyladenosine synthase from Prochlorococcus marinus (strain MIT 9312).